A 432-amino-acid chain; its full sequence is Glutamyl-tRNA reductase (432 aa).

Residues 49-52 (TCNR), serine 101, 106-108 (ESQ), and glutamine 112 contribute to the substrate site. Cysteine 50 functions as the Nucleophile in the catalytic mechanism. 181 to 186 (GTGETI) contacts NADP(+).

Belongs to the glutamyl-tRNA reductase family. As to quaternary structure, homodimer.

It catalyses the reaction (S)-4-amino-5-oxopentanoate + tRNA(Glu) + NADP(+) = L-glutamyl-tRNA(Glu) + NADPH + H(+). It functions in the pathway porphyrin-containing compound metabolism; protoporphyrin-IX biosynthesis; 5-aminolevulinate from L-glutamyl-tRNA(Glu): step 1/2. In terms of biological role, catalyzes the NADPH-dependent reduction of glutamyl-tRNA(Glu) to glutamate 1-semialdehyde (GSA). This Xylella fastidiosa (strain M12) protein is Glutamyl-tRNA reductase.